Consider the following 362-residue polypeptide: Heat-inducible transcription repressor HrcA (362 aa).

It belongs to the HrcA family.

In terms of biological role, negative regulator of class I heat shock genes (grpE-dnaK-dnaJ and groELS operons). Prevents heat-shock induction of these operons. This is Heat-inducible transcription repressor HrcA from Rhizobium rhizogenes (strain K84 / ATCC BAA-868) (Agrobacterium radiobacter).